The chain runs to 130 residues: Small ribosomal subunit protein uS9 (130 aa).

It belongs to the universal ribosomal protein uS9 family.

The sequence is that of Small ribosomal subunit protein uS9 from Blochmanniella floridana.